The following is a 192-amino-acid chain: Putative acetyltransferase SH0499 (192 aa).

This sequence belongs to the transferase hexapeptide repeat family.

This is Putative acetyltransferase SH0499 from Staphylococcus haemolyticus (strain JCSC1435).